Here is a 423-residue protein sequence, read N- to C-terminus: UPF0597 protein Emin_0811 (423 aa).

This sequence belongs to the UPF0597 family.

This chain is UPF0597 protein Emin_0811, found in Elusimicrobium minutum (strain Pei191).